The chain runs to 368 residues: MGNILRCFKGDDDGGDHYPYYKPTSRPHYQPPHYHGQPAAPPAPLQQQHLGPHGVTPSTVGVAALAHDLLNFESTSMVPDGLSQHVVSSRKAQVKWYQKLLEAYKNTTPPPKTPANAAQLIARALNMIQRADLEGILEFYNLPIPSLPTASSNYQPSLLPEGVQFVLNTLPVYDKCIGDGDGFTAYVPTTDPRESANVPLEVHELVIARTQARKCRDYQSADALLSSLDEAGYKIISCSDDEVLARKYRIRMRGIDAPELKMPYGKESRTALVKLIGGKSVKIYVYDLDQFGRYVGDIYCNNLFIQEQMLKNGHAWHFKTYDKRPEFARWEREARAANRGLWASGNPEKPWDWRRDQRNARQDAIQVY.

Residue G2 is the site of N-myristoyl glycine attachment. The S-palmitoyl cysteine moiety is linked to residue C7. The disordered stretch occupies residues 16–56 (DHYPYYKPTSRPHYQPPHYHGQPAAPPAPLQQQHLGPHGVT). Residues 27-38 (PHYQPPHYHGQP) show a composition bias toward low complexity. Positions 168 to 344 (NTLPVYDKCI…RAANRGLWAS (177 aa)) constitute a TNase-like domain. D181 contacts Ca(2+). Residue R251 is part of the active site. Ca(2+) is bound at residue D256. Active-site residues include E259 and R293.

It belongs to the thermonuclease family. It depends on Ca(2+) as a cofactor.

It is found in the cell membrane. Functionally, enzyme that catalyzes the hydrolysis of both DNA and RNA at the 5' position of the phosphodiester bond. The sequence is that of Probable staphylococcal-like nuclease CAN2 from Oryza sativa subsp. japonica (Rice).